A 328-amino-acid polypeptide reads, in one-letter code: ATP-dependent 6-phosphofructokinase (328 aa).

Glycine 11 contributes to the ATP binding site. Residue 21–25 (RAAVR) participates in ADP binding. ATP contacts are provided by residues 72–73 (RS) and 102–105 (GNGT). Residue asparagine 103 participates in Mg(2+) binding. 126 to 128 (TID) provides a ligand contact to substrate. Aspartate 128 (proton acceptor) is an active-site residue. Residue arginine 155 participates in ADP binding. Substrate contacts are provided by residues arginine 163 and 170–172 (MGR). ADP is bound by residues 186–188 (GAE) and 214–216 (KAS). Residues glutamate 223, arginine 247, and 253-256 (HVQR) contribute to the substrate site.

The protein belongs to the phosphofructokinase type A (PFKA) family. ATP-dependent PFK group I subfamily. Prokaryotic clade 'B1' sub-subfamily. As to quaternary structure, homotetramer. Requires Mg(2+) as cofactor.

The protein localises to the cytoplasm. It carries out the reaction beta-D-fructose 6-phosphate + ATP = beta-D-fructose 1,6-bisphosphate + ADP + H(+). It functions in the pathway carbohydrate degradation; glycolysis; D-glyceraldehyde 3-phosphate and glycerone phosphate from D-glucose: step 3/4. Allosterically activated by ADP and other diphosphonucleosides, and allosterically inhibited by phosphoenolpyruvate. In terms of biological role, catalyzes the phosphorylation of D-fructose 6-phosphate to fructose 1,6-bisphosphate by ATP, the first committing step of glycolysis. This chain is ATP-dependent 6-phosphofructokinase, found in Cytophaga hutchinsonii (strain ATCC 33406 / DSM 1761 / CIP 103989 / NBRC 15051 / NCIMB 9469 / D465).